The following is a 459-amino-acid chain: GTPase Der (459 aa).

EngA-type G domains lie at 4 to 169 and 179 to 355; these read PLVA…PEVT and IAVS…AAHR. Residues 10-17, 57-61, 120-123, 185-192, 232-236, and 297-300 each bind GTP; these read GRPNVGKS, DTGGL, NKCE, DTAGI, and NKWD. The KH-like domain occupies 356–441; the sequence is KRVPTAVVNE…PIRFLWRGKS (86 aa).

Belongs to the TRAFAC class TrmE-Era-EngA-EngB-Septin-like GTPase superfamily. EngA (Der) GTPase family. Associates with the 50S ribosomal subunit.

In terms of biological role, GTPase that plays an essential role in the late steps of ribosome biogenesis. This Synechococcus sp. (strain JA-2-3B'a(2-13)) (Cyanobacteria bacterium Yellowstone B-Prime) protein is GTPase Der.